A 646-amino-acid chain; its full sequence is Anoctamin-10 (646 aa).

The next 8 helical transmembrane spans lie at 210–230 (LYFG…LIGI), 241–261 (DKYV…LEVW), 314–334 (IYLV…YVMM), 357–377 (VLLF…NLLY), 404–424 (VLVF…FVMQ), 502–522 (FLLF…AVLV), 557–577 (LAFE…IALS), and 592–612 (ILTV…LAFV).

The protein belongs to the anoctamin family.

The protein resides in the membrane. Does not exhibit calcium-activated chloride channel (CaCC) activity. Can inhibit the activity of ANO1. In Danio rerio (Zebrafish), this protein is Anoctamin-10 (ano10).